Consider the following 229-residue polypeptide: UPF0173 metal-dependent hydrolase SSP1060 (229 aa).

The protein belongs to the UPF0173 family.

The polypeptide is UPF0173 metal-dependent hydrolase SSP1060 (Staphylococcus saprophyticus subsp. saprophyticus (strain ATCC 15305 / DSM 20229 / NCIMB 8711 / NCTC 7292 / S-41)).